The primary structure comprises 317 residues: Thymidylate synthase (317 aa).

DUMP contacts are provided by residues Arg40 and 167 to 168 (RR). The Nucleophile role is filled by Cys187. Residues 216–219 (RSCD), Asn227, and 257–259 (HVY) contribute to the dUMP site. A (6R)-5,10-methylene-5,6,7,8-tetrahydrofolate-binding site is contributed by Asp219.

This sequence belongs to the thymidylate synthase family. As to quaternary structure, homodimer.

It carries out the reaction dUMP + (6R)-5,10-methylene-5,6,7,8-tetrahydrofolate = 7,8-dihydrofolate + dTMP. It participates in pyrimidine metabolism; dTTP biosynthesis. The sequence is that of Thymidylate synthase (TMP1) from Cryptococcus neoformans var. neoformans serotype D (strain B-3501A) (Filobasidiella neoformans).